The primary structure comprises 268 residues: Large ribosomal subunit protein uL4 (268 aa).

This sequence belongs to the universal ribosomal protein uL4 family. As to quaternary structure, part of the 50S ribosomal subunit.

One of the primary rRNA binding proteins, this protein initially binds near the 5'-end of the 23S rRNA. It is important during the early stages of 50S assembly. It makes multiple contacts with different domains of the 23S rRNA in the assembled 50S subunit and ribosome. Its function is as follows. Forms part of the polypeptide exit tunnel. The polypeptide is Large ribosomal subunit protein uL4 (Nanoarchaeum equitans (strain Kin4-M)).